A 492-amino-acid polypeptide reads, in one-letter code: UDP-N-acetylmuramyl-tripeptide synthetase 2 (492 aa).

Ser30 lines the UDP-N-acetyl-alpha-D-muramoyl-L-alanyl-D-glutamate pocket. Residue 111–117 coordinates ATP; that stretch reads GTNGKTT. UDP-N-acetyl-alpha-D-muramoyl-L-alanyl-D-glutamate-binding positions include 154–155, Ser181, Gln187, and Arg189; that span reads TT. Lys221 carries the N6-carboxylysine modification.

The protein belongs to the MurCDEF family. MurE subfamily. Carboxylation is probably crucial for Mg(2+) binding and, consequently, for the gamma-phosphate positioning of ATP.

The protein localises to the cytoplasm. The protein operates within cell wall biogenesis; peptidoglycan biosynthesis. In terms of biological role, catalyzes the addition of an amino acid to the nucleotide precursor UDP-N-acetylmuramoyl-L-alanyl-D-glutamate (UMAG) in the biosynthesis of bacterial cell-wall peptidoglycan. The chain is UDP-N-acetylmuramyl-tripeptide synthetase 2 from Oceanobacillus iheyensis (strain DSM 14371 / CIP 107618 / JCM 11309 / KCTC 3954 / HTE831).